A 366-amino-acid chain; its full sequence is tRNA 2-selenouridine synthase (366 aa).

The 124-residue stretch at 12–135 (FLNDVPMMDA…MRTFLLDTLH (124 aa)) folds into the Rhodanese domain. The S-selanylcysteine intermediate role is filled by Cys-95.

This sequence belongs to the SelU family. Monomer.

It carries out the reaction 5-methylaminomethyl-2-thiouridine(34) in tRNA + selenophosphate + (2E)-geranyl diphosphate + H2O + H(+) = 5-methylaminomethyl-2-selenouridine(34) in tRNA + (2E)-thiogeraniol + phosphate + diphosphate. The enzyme catalyses 5-methylaminomethyl-2-thiouridine(34) in tRNA + (2E)-geranyl diphosphate = 5-methylaminomethyl-S-(2E)-geranyl-thiouridine(34) in tRNA + diphosphate. The catalysed reaction is 5-methylaminomethyl-S-(2E)-geranyl-thiouridine(34) in tRNA + selenophosphate + H(+) = 5-methylaminomethyl-2-(Se-phospho)selenouridine(34) in tRNA + (2E)-thiogeraniol. It catalyses the reaction 5-methylaminomethyl-2-(Se-phospho)selenouridine(34) in tRNA + H2O = 5-methylaminomethyl-2-selenouridine(34) in tRNA + phosphate. Its function is as follows. Involved in the post-transcriptional modification of the uridine at the wobble position (U34) of tRNA(Lys), tRNA(Glu) and tRNA(Gln). Catalyzes the conversion of 2-thiouridine (S2U-RNA) to 2-selenouridine (Se2U-RNA). Acts in a two-step process involving geranylation of 2-thiouridine (S2U) to S-geranyl-2-thiouridine (geS2U) and subsequent selenation of the latter derivative to 2-selenouridine (Se2U) in the tRNA chain. This chain is tRNA 2-selenouridine synthase, found in Pseudomonas syringae pv. syringae (strain B728a).